Consider the following 325-residue polypeptide: Tagatose 1,6-diphosphate aldolase 1 (325 aa).

Belongs to the aldolase LacD family.

The catalysed reaction is D-tagatofuranose 1,6-bisphosphate = D-glyceraldehyde 3-phosphate + dihydroxyacetone phosphate. Its pathway is carbohydrate metabolism; D-tagatose 6-phosphate degradation; D-glyceraldehyde 3-phosphate and glycerone phosphate from D-tagatose 6-phosphate: step 2/2. The polypeptide is Tagatose 1,6-diphosphate aldolase 1 (lacD1) (Streptococcus pyogenes serotype M1).